Consider the following 376-residue polypeptide: Endo-1,4-beta-xylanase A (376 aa).

The N-terminal stretch at 1 to 18 (MHLASSLFLLATLPFGFA) is a signal peptide. The GH10 domain maps to 55–355 (QRERAGLEDK…HPAYYGVVEA (301 aa)). A glycan (N-linked (GlcNAc...) asparagine) is linked at Asn100. Residue Glu170 is the Proton donor of the active site. The active-site Nucleophile is the Glu277. Asn358 carries N-linked (GlcNAc...) asparagine glycosylation.

It belongs to the glycosyl hydrolase 10 (cellulase F) family.

The protein resides in the secreted. The catalysed reaction is Endohydrolysis of (1-&gt;4)-beta-D-xylosidic linkages in xylans.. It participates in glycan degradation; xylan degradation. Its activity is regulated as follows. Partial inhibition of activity is detected in the presence of Ag(+), Cu2(+) and SDS. Like most fungal xylanases, activity is completely inhibited by Hg(2+) since Hg(2+) could interact with tryptophan residues and oxidize the indole ring. Beta-mercaptoethanol enhances the enzymatic activity by counteracting the oxidation effects of the S-S linkage between cysteine residues. Its function is as follows. Endo-1,4-beta-xylanase involved in the hydrolysis of xylan, a major structural heterogeneous polysaccharide found in plant biomass representing the second most abundant polysaccharide in the biosphere, after cellulose. Is most active on birchwood xylan (defined as 100%), moderate on beechwood xylan (96.8%) and soluble wheat arabinoxylan (84.5%), and weak on insoluble wheat arabinoxylan (19.7%). Hydrolyzes substrates into a mixture of xylobiose and xylotriose, but no xylose. No activity was detected in the presence of barley beta-glucan, carboxymethyl cellulose-sodium (CMC-Na), and Avicel. Acts as an alkali-tolerant xylanase, exhibiting 68.8% of the activity at pH 9.0, and even 31.8% at pH 10.0. In Humicola insolens (Soft-rot fungus), this protein is Endo-1,4-beta-xylanase A.